The chain runs to 626 residues: Trehalase (626 aa).

The next 2 helical transmembrane spans lie at 20 to 40 (KLFL…FIYL) and 45 to 65 (SLFF…MLDS). Residues Arg-224, Asp-232, Asn-268, Arg-277, Gln-279, Arg-344, and Glu-346 each coordinate alpha,alpha-trehalose. Catalysis depends on proton donor/acceptor residues Asp-380 and Glu-580. Residues Glu-580 and Glu-595 each coordinate alpha,alpha-trehalose.

The protein belongs to the glycosyl hydrolase 37 family. Forms homodimers. As to expression, highly expressed in flowers. Expressed at low levels in leaves and stems. Expressed in guard cells.

It is found in the cell membrane. It localises to the cytoplasm. The protein localises to the nucleus. It carries out the reaction alpha,alpha-trehalose + H2O = alpha-D-glucose + beta-D-glucose. Involved in the regulation of trehalose content by hydrolyzing trehalose to glucose. May play a role in the regulation of abscisic acid-induced stomatal closure in response to drought stress. The protein is Trehalase (TRE1) of Arabidopsis thaliana (Mouse-ear cress).